The primary structure comprises 253 residues: tRNA1(Val) (adenine(37)-N6)-methyltransferase (253 aa).

The protein belongs to the methyltransferase superfamily. tRNA (adenine-N(6)-)-methyltransferase family.

It localises to the cytoplasm. It catalyses the reaction adenosine(37) in tRNA1(Val) + S-adenosyl-L-methionine = N(6)-methyladenosine(37) in tRNA1(Val) + S-adenosyl-L-homocysteine + H(+). Its function is as follows. Specifically methylates the adenine in position 37 of tRNA(1)(Val) (anticodon cmo5UAC). This Dickeya chrysanthemi (strain Ech1591) (Dickeya zeae (strain Ech1591)) protein is tRNA1(Val) (adenine(37)-N6)-methyltransferase.